We begin with the raw amino-acid sequence, 257 residues long: HTH-type transcriptional activator mta (257 aa).

An HTH merR-type domain is found at 2–71 (KYQVKQVAEI…LDEIKEMLDH (70 aa)). Positions 5-24 (VKQVAEISGVSIRTLHHYDN) form a DNA-binding region, H-T-H motif. Residues 71-74 (HPNF) form a hinge region. Residues 76-104 (RKAALQSQKEILMKKKQRMDEMIQTIDRT) are essential for dimerization. Residues 76 to 107 (RKAALQSQKEILMKKKQRMDEMIQTIDRTLLS) are a coiled coil.

As to quaternary structure, homodimer.

Its subcellular location is the cytoplasm. In terms of biological role, global transcriptional regulator that activates transcription of bmr and blt by binding directly to their promoter. Also stimulates the expression of the mta gene itself, ydfK and ymfE. The protein is HTH-type transcriptional activator mta (mta) of Bacillus subtilis (strain 168).